The primary structure comprises 65 residues: Large ribosomal subunit protein bL35 (65 aa).

2 disordered regions span residues 1–23 (MPKL…GGFK) and 36–65 (MTTK…MPYA). The segment covering 54–65 (DTTSLVQQMPYA) has biased composition (polar residues).

It belongs to the bacterial ribosomal protein bL35 family.

This Francisella tularensis subsp. tularensis (strain FSC 198) protein is Large ribosomal subunit protein bL35.